Reading from the N-terminus, the 110-residue chain is Antimicrobial peptide microplusin (110 aa).

Positions 1-20 are cleaved as a signal peptide; it reads MKAIFVSALLVVALVASTSA. 3 disulfides stabilise this stretch: Cys26/Cys72, Cys39/Cys100, and Cys61/Cys66.

As to expression, expressed in the hemocytes, fat body and ovaries.

Its subcellular location is the secreted. Its function is as follows. Has bacteriostatic activity against the Gram-positive bacterium M.luteus, but not against Gram-negative bacterium E.coli SBS363. Has fungistatic activity against C.neoformans, but not C.albicans. Binds and sequesters copper and iron ions. Copper-chelating is crucial for antimicrobial activity against M.luteus. This is Antimicrobial peptide microplusin from Rhipicephalus microplus (Cattle tick).